The following is a 140-amino-acid chain: Photosystem I reaction center subunit XI (140 aa).

3 helical membrane passes run 48–68 (LEIG…LGPL), 79–99 (LLSA…YGAV), and 119–139 (SGFL…LTLF).

The protein belongs to the PsaL family.

The protein resides in the plastid. It is found in the chloroplast thylakoid membrane. The sequence is that of Photosystem I reaction center subunit XI from Cyanidioschyzon merolae (strain NIES-3377 / 10D) (Unicellular red alga).